The following is a 710-amino-acid chain: Probable threonine--tRNA ligase 1, cytoplasmic (710 aa).

Residues M1–V35 form a disordered region. The segment covering P18–P33 has biased composition (basic and acidic residues). In terms of domain architecture, TGS spans K72–K137.

The protein belongs to the class-II aminoacyl-tRNA synthetase family.

Its subcellular location is the cytoplasm. The enzyme catalyses tRNA(Thr) + L-threonine + ATP = L-threonyl-tRNA(Thr) + AMP + diphosphate + H(+). The sequence is that of Probable threonine--tRNA ligase 1, cytoplasmic (thrS1) from Dictyostelium discoideum (Social amoeba).